The primary structure comprises 415 residues: Serine hydroxymethyltransferase (415 aa).

(6S)-5,6,7,8-tetrahydrofolate is bound by residues L118 and 122 to 124 (GHL). K227 is modified (N6-(pyridoxal phosphate)lysine).

This sequence belongs to the SHMT family. As to quaternary structure, homodimer. The cofactor is pyridoxal 5'-phosphate.

Its subcellular location is the cytoplasm. It catalyses the reaction (6R)-5,10-methylene-5,6,7,8-tetrahydrofolate + glycine + H2O = (6S)-5,6,7,8-tetrahydrofolate + L-serine. Its pathway is one-carbon metabolism; tetrahydrofolate interconversion. It functions in the pathway amino-acid biosynthesis; glycine biosynthesis; glycine from L-serine: step 1/1. Its function is as follows. Catalyzes the reversible interconversion of serine and glycine with tetrahydrofolate (THF) serving as the one-carbon carrier. This reaction serves as the major source of one-carbon groups required for the biosynthesis of purines, thymidylate, methionine, and other important biomolecules. Also exhibits THF-independent aldolase activity toward beta-hydroxyamino acids, producing glycine and aldehydes, via a retro-aldol mechanism. The polypeptide is Serine hydroxymethyltransferase (Elusimicrobium minutum (strain Pei191)).